The chain runs to 555 residues: Methyl-coenzyme M reductase subunit alpha (555 aa).

Q152 lines the coenzyme F430 pocket. Residues R230, 261–262 (KH), and R275 each bind coenzyme B. 2 residues coordinate coenzyme M: Y337 and Y448.

It belongs to the methyl-coenzyme M reductase alpha subunit family. As to quaternary structure, MCR is a hexamer of two alpha, two beta, and two gamma chains, forming a dimer of heterotrimers. Coenzyme F430 is required as a cofactor.

The protein localises to the cytoplasm. It carries out the reaction coenzyme B + methyl-coenzyme M = methane + coenzyme M-coenzyme B heterodisulfide. It functions in the pathway one-carbon metabolism; methyl-coenzyme M reduction; methane from methyl-coenzyme M: step 1/1. Functionally, component of the methyl-coenzyme M reductase (MCR) I that catalyzes the reductive cleavage of methyl-coenzyme M (CoM-S-CH3 or 2-(methylthio)ethanesulfonate) using coenzyme B (CoB or 7-mercaptoheptanoylthreonine phosphate) as reductant which results in the production of methane and the mixed heterodisulfide of CoB and CoM (CoM-S-S-CoB). This is the final step in methanogenesis. In Methanococcus voltae, this protein is Methyl-coenzyme M reductase subunit alpha (mcrA).